A 568-amino-acid polypeptide reads, in one-letter code: Autophagy-related protein 17 (568 aa).

Disordered stretches follow at residues 1 to 59 and 522 to 568; these read MASF…DSSE and SYEM…ERPF. Positions 522–546 are enriched in basic and acidic residues; sequence SYEMEAHGEPENEGKVETAYERETE.

The protein belongs to the ATG17 family.

It localises to the cytoplasm. It is found in the preautophagosomal structure membrane. Functionally, autophagy-specific protein that functions in response to autophagy-inducing signals as a scaffold to recruit other ATG proteins to organize pre-autophagosomal structure (PAS) formation. Modulates the timing and magnitude of the autophagy response, such as the size of the sequestering vesicles. Plays particularly a role in pexophagy and nucleophagy. The protein is Autophagy-related protein 17 (apg-9) of Neurospora crassa (strain ATCC 24698 / 74-OR23-1A / CBS 708.71 / DSM 1257 / FGSC 987).